The following is a 605-amino-acid chain: MKKYLHILPACFLFYAAAHAQQKDTVYVTDFGAVPYSYENCVTQIQAAIDECKRTGAKVLSLPEGRYDIWPEGATRKEYYISNTSTEQECPSKVKTVGLMLHEIDDLTIEGNGATLMYHGKMTTIALEHCNGVRINNLHIDFERPAGSEIQYRKVTGGETEVTLHRDTRYEIVNGKIRLYGEGWRSNKNHCIEYDPDTESFTYSQGWNTLSASDAREIAPGIVRFNTPAEFMPKAGNTLTVRDIIRDQVGFFILESKNITLSRLQMHYMHGLGIVSQYTENITMDRVKCAPRPDSGRLLAASADMMHFSGCKGKVIIDSCYFAGAQDDPVNVHGTNLRALEKIDAQTLKLRFMHGQSYGFNAYFKGDTVAFIRAATMERFASATVRDVRRISDRIVEVRFDRDIPTSLELNHDCVENMTCTPEVEIRNSYFTRTSTRGTLVTTPRKVVIENNTYYKTGMSAILIEADAEGWYESGPVKDVLIKGNTFIDCAYNGGPGHAVIAIHPSNKIIDAERPVHQNIRIEDNTFRTFDYPVLYAKSTAGLLFRNNTIVRTETFPAASGNPYVFYLNGCKKAVIEGTVFKGETPRQSIKTENMKRKDLKTTIK.

Residues 1–20 (MKKYLHILPACFLFYAAAHA) form the signal peptide. PbH1 repeat units lie at residues 256–278 (SKNI…VSQY), 312–334 (KGKV…NVHG), 421–443 (TPEV…LVTT), 444–466 (PRKV…LIEA), 477–507 (VKDV…HPSN), and 517–547 (HQNI…LFRN).

It belongs to the glycosyl hydrolase 110 family. A subfamily.

The enzyme catalyses Hydrolysis of terminal, non-reducing branched (1-&gt;3)-alpha-D-galactosidic residues, producing free D-galactose.. The catalysed reaction is Hydrolysis of terminal, non-reducing alpha-D-galactose residues in alpha-D-galactosides, including galactose oligosaccharides, galactomannans and galactolipids.. Its function is as follows. Alpha-galactosidase that specifically removes branched alpha-1,3-linked galactose residues present in blood group B antigens. Has no activity toward linear alpha-1,3-linked galactose residues. In Bacteroides fragilis (strain YCH46), this protein is Alpha-1,3-galactosidase A (glaA).